The sequence spans 325 residues: Tartrate-resistant acid phosphatase type 5 (325 aa).

The signal sequence occupies residues 1–21 (MDMWTALLILQALLLPSLADG). Fe cation-binding residues include Asp33, Asp71, Tyr74, and Asn110. Asn116 and Asn147 each carry an N-linked (GlcNAc...) asparagine glycan. Cysteines 161 and 219 form a disulfide. Fe cation is bound by residues His205, His240, and His242.

The protein belongs to the metallophosphoesterase superfamily. Purple acid phosphatase family. Exists either as monomer or, after proteolytic processing, as a dimer of two chains linked by disulfide bond(s). The cofactor is Fe cation.

It is found in the lysosome. The enzyme catalyses a phosphate monoester + H2O = an alcohol + phosphate. In terms of biological role, involved in osteopontin/bone sialoprotein dephosphorylation. Its expression seems to increase in certain pathological states such as Gaucher and Hodgkin diseases, the hairy cell, the B-cell, and the T-cell leukemias. The protein is Tartrate-resistant acid phosphatase type 5 (ACP5) of Homo sapiens (Human).